The primary structure comprises 446 residues: NADP-specific glutamate dehydrogenase (446 aa).

Substrate-binding residues include K92, Q113, and K116. K128 serves as the catalytic Proton donor. G167 is a substrate binding site. Residues T211 and N242 each coordinate NADP(+). S379 contributes to the substrate binding site.

The protein belongs to the Glu/Leu/Phe/Val dehydrogenases family. Homohexamer.

The enzyme catalyses L-glutamate + NADP(+) + H2O = 2-oxoglutarate + NH4(+) + NADPH + H(+). Its function is as follows. Catalyzes the reversible oxidative deamination of glutamate to a-ketoglutarate and ammonia. The sequence is that of NADP-specific glutamate dehydrogenase (gdhA) from Unknown prokaryotic organism.